We begin with the raw amino-acid sequence, 261 residues long: tRNA pseudouridine synthase A (261 aa).

Residue D51 is the Nucleophile of the active site. Y109 provides a ligand contact to substrate.

The protein belongs to the tRNA pseudouridine synthase TruA family. Homodimer.

It catalyses the reaction uridine(38/39/40) in tRNA = pseudouridine(38/39/40) in tRNA. Formation of pseudouridine at positions 38, 39 and 40 in the anticodon stem and loop of transfer RNAs. This Shewanella sp. (strain ANA-3) protein is tRNA pseudouridine synthase A.